Consider the following 140-residue polypeptide: MPSSSKSDFSFSTLIIPQHYLRAILKVVSSSSVEVCGFLFGKENRVLKVRFIRNRLNSPVEFEMDPEEMLKALEEAEQENLEVVGIFHSHIACPPIPSGKDLEGMKRWPVIWLIVNEKGEYKAWILSEKNKISEVKIVVE.

The MPN domain occupies 13 to 133 (TLIIPQHYLR…WILSEKNKIS (121 aa)). Glutamate 34 (proton donor/acceptor) is an active-site residue. Zn(2+) is bound by residues histidine 88, histidine 90, and aspartate 101. The JAMM motif signature appears at 88–101 (HSHIACPPIPSGKD).

It belongs to the peptidase M67B family. Exists in two major states: monomer and homodimer. Both conformational states are catalytically active. The cofactor is Zn(2+). Post-translationally, the disulfide bridge probably stabilizes the PfJAMM1 homodimer at the optimal growth temperature of the hyperthermophile.

The enzyme catalyses an N(6)-[small archaeal modifier protein]-[protein]-L-lysine + H2O = a [protein]-L-lysine + a [small archaeal modifier protein].. Inhibited by EDTA in vitro. In terms of biological role, metalloprotease that displays desampylase (DSAMP) activity, cleaving ubiquitin-like small archaeal modifier proteins (SAMP1, SAMP2 and SAMP3) from protein conjugates (isopeptide- and linear-linked). Thus, likely regulates sampylation and the pools of 'free' SAMP available for protein modification. In vitro, is also able to cleave non-physiological ubiquitin (Ub) substrates, such as 'Met1-', 'Lys48-', and 'Lys63'-linked Ub dimers (Ub2), and to remove Ub tags from diverse proteins. This is Desampylase from Pyrococcus furiosus (strain ATCC 43587 / DSM 3638 / JCM 8422 / Vc1).